The sequence spans 414 residues: Esterase FrsA (414 aa).

Belongs to the FrsA family.

The enzyme catalyses a carboxylic ester + H2O = an alcohol + a carboxylate + H(+). Catalyzes the hydrolysis of esters. In Salmonella choleraesuis (strain SC-B67), this protein is Esterase FrsA.